A 362-amino-acid chain; its full sequence is Serine/threonine-protein kinase SRK2D (362 aa).

Positions 23 to 279 (YDFVKDIGSG…IPEITSDKWF (257 aa)) constitute a Protein kinase domain. ATP-binding positions include 29–37 (IGSGNFGVA) and lysine 52. Aspartate 142 (proton acceptor) is an active-site residue.

Belongs to the protein kinase superfamily. Ser/Thr protein kinase family. Interacts with ABI1. Interacts with I-2, TOPP1 and TOPP2. Interacts with FREE1 (via C-terminus). As to expression, expressed in seeds, seedlings, roots (especially in tips), stems, leaves, shoots, flowers and siliques.

It catalyses the reaction L-seryl-[protein] + ATP = O-phospho-L-seryl-[protein] + ADP + H(+). The catalysed reaction is L-threonyl-[protein] + ATP = O-phospho-L-threonyl-[protein] + ADP + H(+). Together with SRK2I, key component and activator of the abscisic acid (ABA) signaling pathway that regulates numerous ABA responses, such as seed germination, Pro accumulation, root growth inhibition, dormancy and seedling growth, and, to a lesser extent, stomatal closure. In response to ABA, phosphorylates the ESCRT-I complex component FREE1, which is required for ABA-induced FREE1 nuclear import. The protein is Serine/threonine-protein kinase SRK2D (SRK2D) of Arabidopsis thaliana (Mouse-ear cress).